We begin with the raw amino-acid sequence, 153 residues long: NADPH-dependent 7-cyano-7-deazaguanine reductase (153 aa).

The active-site Thioimide intermediate is Cys-51. Asp-58 serves as the catalytic Proton donor. Substrate contacts are provided by residues 73–75 and 92–93; these read LES and HE.

The protein belongs to the GTP cyclohydrolase I family. QueF type 1 subfamily.

It localises to the cytoplasm. The catalysed reaction is 7-aminomethyl-7-carbaguanine + 2 NADP(+) = 7-cyano-7-deazaguanine + 2 NADPH + 3 H(+). It participates in tRNA modification; tRNA-queuosine biosynthesis. Catalyzes the NADPH-dependent reduction of 7-cyano-7-deazaguanine (preQ0) to 7-aminomethyl-7-deazaguanine (preQ1). The polypeptide is NADPH-dependent 7-cyano-7-deazaguanine reductase (Bradyrhizobium diazoefficiens (strain JCM 10833 / BCRC 13528 / IAM 13628 / NBRC 14792 / USDA 110)).